The following is a 447-amino-acid chain: Tubulin beta chain (447 aa).

Glutamine 11, glutamate 69, serine 138, glycine 142, threonine 143, glycine 144, asparagine 204, and asparagine 226 together coordinate GTP. Glutamate 69 is a Mg(2+) binding site.

Belongs to the tubulin family. Dimer of alpha and beta chains. A typical microtubule is a hollow water-filled tube with an outer diameter of 25 nm and an inner diameter of 15 nM. Alpha-beta heterodimers associate head-to-tail to form protofilaments running lengthwise along the microtubule wall with the beta-tubulin subunit facing the microtubule plus end conferring a structural polarity. Microtubules usually have 13 protofilaments but different protofilament numbers can be found in some organisms and specialized cells. It depends on Mg(2+) as a cofactor.

It localises to the cytoplasm. It is found in the cytoskeleton. Tubulin is the major constituent of microtubules, a cylinder consisting of laterally associated linear protofilaments composed of alpha- and beta-tubulin heterodimers. Microtubules grow by the addition of GTP-tubulin dimers to the microtubule end, where a stabilizing cap forms. Below the cap, tubulin dimers are in GDP-bound state, owing to GTPase activity of alpha-tubulin. This chain is Tubulin beta chain, found in Trichophyton rubrum (Athlete's foot fungus).